Here is a 369-residue protein sequence, read N- to C-terminus: MTKNLYLGVMSGTSLDGVDLCVMDFAKNPPKLTACGFTPMPEDLRTDLSHLLKSGETSLQKLGEIDHRLGLLYAESIKRFLAEHQLSASDIQAIGCHGQTVWHSPNGNFPFTMQIGDMNLVAAHTGITTIADFRRKDMAVGGQGAPLVPAFHEGIFASPERLTVVLNIGGISNISVLAPQQPTIGYDVSVGNALMDSWIELHQAKRYDKNAEWAKTGTLIPALLDSLLDEPFFKLPAPKSTGRELFNLEWLVKKSANLTTYRPEDVQRTLAEFTVQSVVNELKTLESEKQCLLLACGGGARNPLLMQRFSELLPKWQVATTDEYGLDIDYVEAAAFAWLAYQRVHNLTNNLPSVTGAKEPVSLGVIYPK.

Residue 12 to 19 (GTSLDGVD) coordinates ATP.

Belongs to the anhydro-N-acetylmuramic acid kinase family.

It carries out the reaction 1,6-anhydro-N-acetyl-beta-muramate + ATP + H2O = N-acetyl-D-muramate 6-phosphate + ADP + H(+). The protein operates within amino-sugar metabolism; 1,6-anhydro-N-acetylmuramate degradation. It participates in cell wall biogenesis; peptidoglycan recycling. In terms of biological role, catalyzes the specific phosphorylation of 1,6-anhydro-N-acetylmuramic acid (anhMurNAc) with the simultaneous cleavage of the 1,6-anhydro ring, generating MurNAc-6-P. Is required for the utilization of anhMurNAc either imported from the medium or derived from its own cell wall murein, and thus plays a role in cell wall recycling. The polypeptide is Anhydro-N-acetylmuramic acid kinase (Actinobacillus pleuropneumoniae serotype 3 (strain JL03)).